The following is a 69-amino-acid chain: Double-strand break reduction protein (69 aa).

Helps to maintain the integrity of the chromosome by lowering the steady-state level of double strand breaks. This region of DNA acts as an antitoxin to toxin RalR, a DNase, but it seems to be sRNA RalA that has the antitoxin activity and not this putative protein. Therefore the identity of this as a protein-coding gene has been cast into doubt. In Escherichia coli (strain K12), this protein is Double-strand break reduction protein.